Here is a 55-residue protein sequence, read N- to C-terminus: Large ribosomal subunit protein bL32 (55 aa).

The disordered stretch occupies residues 1–28 (MAVQQNKPTRSKRGMRRSHDALTTATLS).

It belongs to the bacterial ribosomal protein bL32 family.

The chain is Large ribosomal subunit protein bL32 from Serratia proteamaculans (strain 568).